A 188-amino-acid chain; its full sequence is Epididymal-specific lipocalin-5 (188 aa).

Residues 1 to 19 (MENIMPFALLGLCVGLAAG) form the signal peptide. Cys-82 and Cys-176 are disulfide-bonded.

Belongs to the calycin superfamily. Lipocalin family. In terms of processing, there are two similar, immunologically cross-reacting forms of this protein, designated B and C, which probably result from different processing of the amino end. Post-translationally, the N-terminus of form C is probably blocked. Synthesized exclusively in the proximal part (caput epididymidis) of the epididymis. It makes up a substantial part of the total protein in the epididymal luminal fluid and binds to the sperm membrane.

It is found in the secreted. In terms of biological role, associates with spermatozoa in the epididymal fluid but does not bind tightly to them. Binds both all-trans and 9-cis retinoic acid. May act as a retinoid carrier protein which is required for epididymal function and/or sperm maturation. The sequence is that of Epididymal-specific lipocalin-5 (Lcn5) from Rattus norvegicus (Rat).